A 1509-amino-acid chain; its full sequence is Myosin-2 heavy chain, non muscle (1509 aa).

Residues 32–85 (SDKTLAWWPTKDADRAFCHVEVTKDDGKNFTVRLENGEEKSQPKNEKNFLGVNP) enclose the Myosin N-terminal SH3-like domain. Residues 89-787 (DGVEDMGELG…QLAAIEELRE (699 aa)) form the Myosin motor domain. Position 133 is an N6,N6,N6-trimethyllysine (K133). 182–189 (GESGAGKT) contributes to the ATP binding site. The segment at 623-643 (APAEEEKAAAGGSRNRSTGRG) is disordered. 2 actin-binding regions span residues 660–682 (LAHLMSMLSSTAPHFIRCIIPNL) and 766–780 (RFGVTKIFFRSGQLA). Residues 790–819 (ISKMVVSIQAGARAFLARRMYDKMREQTVS) enclose the IQ domain. Positions 848–1226 (LISQRNFQKE…AERDSGAQQR (379 aa)) are alpha-helical tailpiece (S2). Positions 848–1509 (LISQRNFQKE…VRAGSARAEE (662 aa)) form a coiled coil. 5 stretches are compositionally biased toward basic and acidic residues: residues 958 to 1019 (ELKA…KDAL), 1034 to 1047 (KNTERGADDVRNEL), 1097 to 1107 (EDARSEVDSLK), 1115 to 1141 (KSLKTAKDQNRDLDEQLEDERTVRANV), and 1179 to 1189 (QVDETKRRLEE). Disordered regions lie at residues 958–1049 (ELKA…ELDD), 1068–1141 (LAQT…RANV), 1170–1195 (AAQAKTLKTQVDETKRRLEEAEASAA), 1213–1259 (ADLD…RLEG), 1352–1425 (VAKE…NREL), and 1474–1509 (QLQDEIDGTPSSRGGSTRGASARGASVRAGSARAEE). Residues 1227–1252 (RKLNTRISELQSELENAPKTGGASSE) form a hinge region. Residues 1231 to 1240 (TRISELQSEL) are compositionally biased toward polar residues. The tract at residues 1253-1482 (EVKRLEGELE…AQLQDEIDGT (230 aa)) is alpha-helical tailpiece (LMM). The light meromyosin (LMM) stretch occupies residues 1253 to 1509 (EVKRLEGELE…VRAGSARAEE (257 aa)). Residues 1483 to 1509 (PSSRGGSTRGASARGASVRAGSARAEE) form a nonhelical tailpiece region. The span at 1484–1509 (SSRGGSTRGASARGASVRAGSARAEE) shows a compositional bias: low complexity. S1489, S1494, and S1499 each carry phosphoserine.

This sequence belongs to the TRAFAC class myosin-kinesin ATPase superfamily. Myosin family. Myosin II heavy chain is two-headed. It self-assembles into filaments. Hexamer of 2 heavy chain subunits (MHC), 2 alkali light chain subunits (MLC) and 2 regulatory light chain subunits (MLC-2).

Functionally, myosin is a protein that binds to F-actin and has ATPase activity that is activated by F-actin. The sequence is that of Myosin-2 heavy chain, non muscle from Acanthamoeba castellanii (Amoeba).